We begin with the raw amino-acid sequence, 647 residues long: MAATGVGAGCLAPSVRLRADPATAARASACVVRARLRRVARGRYVAELSREGPAARPAQQQQLAPPLVPGFLAPPPPAPAQSPAPTQPPLPDAGVGELAPDLLLEGIAEDSIDSIIVAASEQDSEIMDAKDQPQAKVTRSIVFVTGEAAPYAKSGGLGDVCGSLPIALAARGHRVMVVMPRYLNGSSDKNYAKALYTAKHIKIPCFGGSHEVTFFHEYRDNVDWVFVDHPSYHRPGSLYGDNFGAFGDNQFRYTLLCYAACEAPLILELGGYIYGQNCMFVVNDWHASLVPVLLAAKYRPYGVYRDSRSTLVIHNLAHQGVEPASTYPDLGLPPEWYGALEWVFPEWARRHALDKGEAVNFLKGAVVTADRIVTVSQGYSWEVTTAEGGQGLNELLSSRKSVLNGIVNGIDINDWNPTTDKCLPHHYSVDDLSGKAKCKAELQKELGLPVREDVPLIGFIGRLDYQKGIDLIKMAIPELMREDVQFVMLGSGDPIFEGWMRSTESSYKDKFRGWVGFSVPVSHRITAGCDILLMPSRFEPCGLNQLYAMQYGTVPVVHGTGGLRDTVETFNPFGAKGEEGTGWAFSPLTVDKMLWALRTAMSTFREHKPSWEGLMKRGMTKDHTWDHAAEQYEQIFEWAFVDQPYVM.

The N-terminal 41 residues, 1-41, are a transit peptide targeting the chloroplast; the sequence is MAATGVGAGCLAPSVRLRADPATAARASACVVRARLRRVAR. A compositionally biased stretch (pro residues) spans 66-91; the sequence is PLVPGFLAPPPPAPAQSPAPTQPPLP. Residues 66-95 are disordered; the sequence is PLVPGFLAPPPPAPAQSPAPTQPPLPDAGV. K153 contributes to the ADP-alpha-D-glucose binding site.

The protein belongs to the glycosyltransferase 1 family. Bacterial/plant glycogen synthase subfamily.

The protein resides in the plastid. Its subcellular location is the chloroplast. The protein localises to the amyloplast. The enzyme catalyses [(1-&gt;4)-alpha-D-glucosyl](n) + ADP-alpha-D-glucose = [(1-&gt;4)-alpha-D-glucosyl](n+1) + ADP + H(+). Its pathway is glycan biosynthesis; starch biosynthesis. The chain is Starch synthase 1, chloroplastic/amyloplastic (WSSI-2) from Triticum aestivum (Wheat).